The chain runs to 261 residues: Uridine-cytidine kinase 2 (261 aa).

The segment covering methionine 1 to asparagine 16 has biased composition (polar residues). The interval methionine 1–glycine 24 is disordered. Alanine 2 bears the N-acetylalanine mark. Glycine 27–serine 35 serves as a coordination point for ATP. Residues aspartate 84, tyrosine 112, histidine 117, arginine 166, arginine 176, and glutamine 184 each contribute to the substrate site. Aspartate 213 is an ATP binding site. Residues glycine 240–histidine 261 form a disordered region. Phosphoserine is present on serine 254.

This sequence belongs to the uridine kinase family. As to quaternary structure, homotetramer.

The catalysed reaction is uridine + ATP = UMP + ADP + H(+). It catalyses the reaction cytidine + ATP = CMP + ADP + H(+). It participates in pyrimidine metabolism; CTP biosynthesis via salvage pathway; CTP from cytidine: step 1/3. The protein operates within pyrimidine metabolism; UMP biosynthesis via salvage pathway; UMP from uridine: step 1/1. Phosphorylates uridine and cytidine to uridine monophosphate and cytidine monophosphate. Does not phosphorylate deoxyribonucleosides or purine ribonucleosides. Can use ATP or GTP as a phosphate donor. The sequence is that of Uridine-cytidine kinase 2 (Uck2) from Mus musculus (Mouse).